A 593-amino-acid chain; its full sequence is DNA primase (593 aa).

The CHC2-type zinc finger occupies 38-62 (CPFHQEKTPSFTVSDSKRFFYCFGC). In terms of domain architecture, Toprim spans 250-332 (NRSILVEGYF…EKKISFIRLP (83 aa)). The Mg(2+) site is built by Glu-256, Asp-300, and Asp-302.

The protein belongs to the DnaG primase family. As to quaternary structure, monomer. Interacts with DnaB. It depends on Zn(2+) as a cofactor. Requires Mg(2+) as cofactor.

It catalyses the reaction ssDNA + n NTP = ssDNA/pppN(pN)n-1 hybrid + (n-1) diphosphate.. RNA polymerase that catalyzes the synthesis of short RNA molecules used as primers for DNA polymerase during DNA replication. The protein is DNA primase of Rickettsia prowazekii (strain Madrid E).